We begin with the raw amino-acid sequence, 158 residues long: Large ribosomal subunit protein uL15 (158 aa).

A compositionally biased stretch (basic and acidic residues) spans 1-13 (MKLNEIKDNEGST). The disordered stretch occupies residues 1–44 (MKLNEIKDNEGSTHSRKRLGRGIGSGSGKTAGRGVKGQKSRSGV). Over residues 21–35 (RGIGSGSGKTAGRGV) the composition is skewed to gly residues.

It belongs to the universal ribosomal protein uL15 family. As to quaternary structure, part of the 50S ribosomal subunit.

Binds to the 23S rRNA. This Rhizobium etli (strain ATCC 51251 / DSM 11541 / JCM 21823 / NBRC 15573 / CFN 42) protein is Large ribosomal subunit protein uL15.